A 271-amino-acid polypeptide reads, in one-letter code: MATH domain and coiled-coil domain-containing protein At3g27040 (271 aa).

Residues 7 to 133 (DKKFTWVIKN…NGEVKIVAEV (127 aa)) form the MATH domain. The stretch at 230 to 271 (KLDWLEKKLKETGKSRLQEIEEDLKDLKVKCADMDALLDFLR) forms a coiled coil.

This Arabidopsis thaliana (Mouse-ear cress) protein is MATH domain and coiled-coil domain-containing protein At3g27040.